A 315-amino-acid polypeptide reads, in one-letter code: Ribosomal RNA small subunit methyltransferase H (315 aa).

Residues 37 to 39, Asp-57, Phe-83, Asp-105, and Gln-112 contribute to the S-adenosyl-L-methionine site; that span reads GGH.

Belongs to the methyltransferase superfamily. RsmH family.

The protein localises to the cytoplasm. The enzyme catalyses cytidine(1402) in 16S rRNA + S-adenosyl-L-methionine = N(4)-methylcytidine(1402) in 16S rRNA + S-adenosyl-L-homocysteine + H(+). Functionally, specifically methylates the N4 position of cytidine in position 1402 (C1402) of 16S rRNA. In Pseudomonas fluorescens (strain SBW25), this protein is Ribosomal RNA small subunit methyltransferase H.